The following is a 261-amino-acid chain: Claudin-18 (261 aa).

Residues 1-6 (MSTTTC) are Cytoplasmic-facing. The helical transmembrane segment at 7 to 27 (QVVAFLLSILGLAGCIAATGM) threads the bilayer. Topologically, residues 28–80 (DMWSTQDLYDNPVTSVFQYEGLWRSCVRQSSGFTECRPYFTILGLPAMLQAVR) are extracellular. A helical membrane pass occupies residues 81-101 (ALMIVGIVLGAIGLLVSIFAL). Topologically, residues 102-122 (KCIRIGSMEDSAKANMTLTSG) are cytoplasmic. A helical membrane pass occupies residues 123–143 (IMFIVSGLCAIAGVSVFANML). The Extracellular segment spans residues 144 to 174 (VTNFWMSTANMYTGMGGMVQTVQTRYTFGAA). The chain crosses the membrane as a helical span at residues 175 to 195 (LFVGWVAGGLTLIGGVMMCIA). Residues 195–261 (ACRGLAPEET…QSYPSKHDYV (67 aa)) form a required for role in regulation of RANKL-induced osteoclast differentiation region. Over 196-261 (CRGLAPEETN…QSYPSKHDYV (66 aa)) the chain is Cytoplasmic. Residue Ser214 is modified to Phosphoserine. The tract at residues 242-261 (DGGARTEDEVQSYPSKHDYV) is disordered.

Belongs to the claudin family. In terms of assembly, interacts with TJP2/ZO-2. Interacts with TJP1/ZO-1. Interacts with YAP1 (phosphorylated); the interaction sequesters YAP1 away from the nucleus and thereby restricts transcription of YAP1 target genes. Interacts with CLDN19. Expression is restricted to the lung. As to expression, expression is restricted to the stomach mucosa where it is predominantly observed in the epithelial cells of the pit region and the base of the gastric glands including exocrine and endocrine cells (at protein level).

Its subcellular location is the cell junction. The protein resides in the tight junction. It is found in the cell membrane. It localises to the lateral cell membrane. In terms of biological role, involved in alveolar fluid homeostasis via regulation of alveolar epithelial tight junction composition and therefore ion transport and solute permeability, potentially via downstream regulation of the actin cytoskeleton organization and beta-2-adrenergic signaling. Required for lung alveolarization and maintenance of the paracellular alveolar epithelial barrier. Acts to maintain epithelial progenitor cell proliferation and organ size, via regulation of YAP1 localization away from the nucleus and thereby restriction of YAP1 target gene transcription. Acts as a negative regulator of RANKL-induced osteoclast differentiation, potentially via relocation of TJP2/ZO-2 away from the nucleus, subsequently involved in bone resorption in response to calcium deficiency. Mediates the osteoprotective effects of estrogen, potentially via acting downstream of estrogen signaling independently of RANKL signaling pathways. Functionally, involved in the maintenance of homeostasis of the alveolar microenvironment via regulation of pH and subsequent T-cell activation in the alveolar space, is therefore indirectly involved in limiting C.neoformans infection. Its function is as follows. Required for the formation of the gastric paracellular barrier via its role in tight junction formation, thereby involved in the response to gastric acidification. This Homo sapiens (Human) protein is Claudin-18 (CLDN18).